The following is a 357-amino-acid chain: Phosphoribosylformylglycinamidine cyclo-ligase (357 aa).

The protein belongs to the AIR synthase family.

Its subcellular location is the cytoplasm. The catalysed reaction is 2-formamido-N(1)-(5-O-phospho-beta-D-ribosyl)acetamidine + ATP = 5-amino-1-(5-phospho-beta-D-ribosyl)imidazole + ADP + phosphate + H(+). It functions in the pathway purine metabolism; IMP biosynthesis via de novo pathway; 5-amino-1-(5-phospho-D-ribosyl)imidazole from N(2)-formyl-N(1)-(5-phospho-D-ribosyl)glycinamide: step 2/2. The sequence is that of Phosphoribosylformylglycinamidine cyclo-ligase from Rhizobium leguminosarum.